Here is a 354-residue protein sequence, read N- to C-terminus: ATP-dependent (S)-NAD(P)H-hydrate dehydratase (354 aa).

The YjeF C-terminal domain occupies 42 to 350 (AENILRAITP…ECLGRSLEDI (309 aa)). Residues Gly-155 and 208–214 (NVNEYKR) each bind (6S)-NADPHX. ATP is bound by residues 248-252 (KGKSD) and 267-276 (GSPRRCGGQG). Asp-277 provides a ligand contact to (6S)-NADPHX.

The protein belongs to the NnrD/CARKD family. It depends on Mg(2+) as a cofactor.

The catalysed reaction is (6S)-NADHX + ATP = ADP + phosphate + NADH + H(+). It catalyses the reaction (6S)-NADPHX + ATP = ADP + phosphate + NADPH + H(+). In terms of biological role, catalyzes the dehydration of the S-form of NAD(P)HX at the expense of ATP, which is converted to ADP. Together with NAD(P)HX epimerase, which catalyzes the epimerization of the S- and R-forms, the enzyme allows the repair of both epimers of NAD(P)HX, a damaged form of NAD(P)H that is a result of enzymatic or heat-dependent hydration. This is ATP-dependent (S)-NAD(P)H-hydrate dehydratase from Vitis vinifera (Grape).